The chain runs to 196 residues: ATP-dependent Clp protease proteolytic subunit (196 aa).

Ser-96 (nucleophile) is an active-site residue. His-121 is an active-site residue.

This sequence belongs to the peptidase S14 family. Fourteen ClpP subunits assemble into 2 heptameric rings which stack back to back to give a disk-like structure with a central cavity, resembling the structure of eukaryotic proteasomes.

The protein resides in the cytoplasm. The enzyme catalyses Hydrolysis of proteins to small peptides in the presence of ATP and magnesium. alpha-casein is the usual test substrate. In the absence of ATP, only oligopeptides shorter than five residues are hydrolyzed (such as succinyl-Leu-Tyr-|-NHMec, and Leu-Tyr-Leu-|-Tyr-Trp, in which cleavage of the -Tyr-|-Leu- and -Tyr-|-Trp bonds also occurs).. In terms of biological role, cleaves peptides in various proteins in a process that requires ATP hydrolysis. Has a chymotrypsin-like activity. Plays a major role in the degradation of misfolded proteins. The chain is ATP-dependent Clp protease proteolytic subunit from Streptococcus sanguinis (strain SK36).